The following is a 97-amino-acid chain: UPF0235 protein HAPS_1504 (97 aa).

The protein belongs to the UPF0235 family.

The chain is UPF0235 protein HAPS_1504 from Glaesserella parasuis serovar 5 (strain SH0165) (Haemophilus parasuis).